The primary structure comprises 428 residues: MGEKERRGQNPKTESNAVELVSCMRVFIPFFWKNFIHDRIFLGAGSLAFQTLLSIVPILAVILSILNVFVVFTPFKRSLEDFLVQNFMPGAGNVLNHYLTDFIGKTASVPILGGVFLFIIALFLISTVDHTLNEIWEVHAPRKALQGFTLYWTVLTLGPVLIGSSLAASSYVWYMVFTDGPLLELKTRLLSFFPFINSVAAFFLLYMLVPNRRVRFVHAFSGALLAALLFELSKRWFTFYITHIATFEHIYGALSVIPMLFFWVYLGWIVVLTGAEFVFCLGALKPVERIADVFSPLRGVPEILSVLAHIWNGQKSGNAMNMKKMLKVIEGLTPSGLRKVIDILLQNGLLHVTVNGDLAISRDLYTMTLYDLYAIIPSGFWGDENGLLISGGNSVHLKTISKGVTECLKNSMDLPLAPLLEDINQQPE.

Helical transmembrane passes span 52-72, 108-128, 148-168, 189-209, 216-233, and 252-272; these read LLSI…FVVF, SVPI…ISTV, FTLY…SLAA, LLSF…YMLV, FVHA…FELS, and GALS…IVVL.

This sequence belongs to the UPF0761 family.

It localises to the cell inner membrane. The protein is UPF0761 membrane protein Ppha_1623 of Pelodictyon phaeoclathratiforme (strain DSM 5477 / BU-1).